The sequence spans 446 residues: Tubulin beta chain (446 aa).

GTP is bound by residues glutamine 11, glutamate 69, serine 138, glycine 142, threonine 143, glycine 144, asparagine 204, and asparagine 226. A Mg(2+)-binding site is contributed by glutamate 69. The tract at residues tyrosine 425–glutamate 446 is disordered. The span at glutamate 432–glutamate 446 shows a compositional bias: acidic residues.

Belongs to the tubulin family. In terms of assembly, dimer of alpha and beta chains. A typical microtubule is a hollow water-filled tube with an outer diameter of 25 nm and an inner diameter of 15 nM. Alpha-beta heterodimers associate head-to-tail to form protofilaments running lengthwise along the microtubule wall with the beta-tubulin subunit facing the microtubule plus end conferring a structural polarity. Microtubules usually have 13 protofilaments but different protofilament numbers can be found in some organisms and specialized cells. Mg(2+) is required as a cofactor.

It is found in the cytoplasm. The protein resides in the cytoskeleton. Tubulin is the major constituent of microtubules, a cylinder consisting of laterally associated linear protofilaments composed of alpha- and beta-tubulin heterodimers. Microtubules grow by the addition of GTP-tubulin dimers to the microtubule end, where a stabilizing cap forms. Below the cap, tubulin dimers are in GDP-bound state, owing to GTPase activity of alpha-tubulin. This chain is Tubulin beta chain (TUB2), found in Blumeria hordei (Barley powdery mildew).